The primary structure comprises 370 residues: Quinolinate synthase (370 aa).

Iminosuccinate-binding residues include H62 and S83. A [4Fe-4S] cluster-binding site is contributed by C128. Iminosuccinate is bound by residues 154-156 (YAN) and S171. A [4Fe-4S] cluster-binding site is contributed by C215. Iminosuccinate contacts are provided by residues 241-243 (HPE) and T258. Residue C312 participates in [4Fe-4S] cluster binding.

This sequence belongs to the quinolinate synthase family. Type 1 subfamily. [4Fe-4S] cluster serves as cofactor.

It localises to the cytoplasm. It catalyses the reaction iminosuccinate + dihydroxyacetone phosphate = quinolinate + phosphate + 2 H2O + H(+). The protein operates within cofactor biosynthesis; NAD(+) biosynthesis; quinolinate from iminoaspartate: step 1/1. Its function is as follows. Catalyzes the condensation of iminoaspartate with dihydroxyacetone phosphate to form quinolinate. The sequence is that of Quinolinate synthase from Neisseria meningitidis serogroup B (strain ATCC BAA-335 / MC58).